We begin with the raw amino-acid sequence, 640 residues long: Threonine--tRNA ligase (640 aa).

Positions 1–61 (MPVITLPDGS…SNDATLQIIT (61 aa)) constitute a TGS domain. A catalytic region spans residues 242 to 533 (DHRKIGKQLD…LIEHYAGVFP (292 aa)). Residues Cys-333, His-384, and His-510 each coordinate Zn(2+).

Belongs to the class-II aminoacyl-tRNA synthetase family. As to quaternary structure, homodimer. Zn(2+) serves as cofactor.

It is found in the cytoplasm. The enzyme catalyses tRNA(Thr) + L-threonine + ATP = L-threonyl-tRNA(Thr) + AMP + diphosphate + H(+). Its function is as follows. Catalyzes the attachment of threonine to tRNA(Thr) in a two-step reaction: L-threonine is first activated by ATP to form Thr-AMP and then transferred to the acceptor end of tRNA(Thr). Also edits incorrectly charged L-seryl-tRNA(Thr). The sequence is that of Threonine--tRNA ligase from Pseudomonas putida (strain ATCC 700007 / DSM 6899 / JCM 31910 / BCRC 17059 / LMG 24140 / F1).